A 329-amino-acid polypeptide reads, in one-letter code: Phosphate acetyltransferase (329 aa).

Belongs to the phosphate acetyltransferase and butyryltransferase family.

Its subcellular location is the cytoplasm. It catalyses the reaction acetyl-CoA + phosphate = acetyl phosphate + CoA. Its pathway is metabolic intermediate biosynthesis; acetyl-CoA biosynthesis; acetyl-CoA from acetate: step 2/2. This is Phosphate acetyltransferase (pta) from Staphylococcus epidermidis (strain ATCC 12228 / FDA PCI 1200).